The following is a 686-amino-acid chain: Hexamerin 70c (686 aa).

The N-terminal stretch at 1–19 (MLSKVVLLVALAAICGAQG) is a signal peptide. A Hemocyanin N-terminal domain is found at 32–155 (FLHKQKKIFD…IAVLYRPDTK (124 aa)). In terms of domain architecture, Hemocyanin middle spans 161-431 (AIYEIYPNYF…MLYQNILSYF (271 aa)). N-linked (GlcNAc...) asparagine glycosylation is found at Asn-205 and Asn-662. Residues 440–676 (QYSQSELQMP…NMYFKDVFIY (237 aa)) form the Hemocyanin C-terminal domain.

Belongs to the hemocyanin/hexamerin family. As to quaternary structure, probable homohexamer. As to expression, expressed in the fat body and secreted into the hemolymph (at protein level). Present in trophocytes and oenocytes of the fat body (at protein level). Not expressed in ovary or testis.

The protein resides in the secreted. It localises to the nucleus. Its subcellular location is the cytoplasm. It is found in the cytoplasmic granule. Storage protein that may function as a nutrient supply to compensate for lack of dietary proteins during metamorphosis and egg production. The polypeptide is Hexamerin 70c (Apis mellifera (Honeybee)).